Here is a 60-residue protein sequence, read N- to C-terminus: UPF0434 protein Aave_2563 (60 aa).

The protein belongs to the UPF0434 family.

The polypeptide is UPF0434 protein Aave_2563 (Paracidovorax citrulli (strain AAC00-1) (Acidovorax citrulli)).